The following is a 111-amino-acid chain: DNA-binding protein AF_2068 (111 aa).

The protein belongs to the PDCD5 family.

This is DNA-binding protein AF_2068 from Archaeoglobus fulgidus (strain ATCC 49558 / DSM 4304 / JCM 9628 / NBRC 100126 / VC-16).